The chain runs to 444 residues: Glutamyl-tRNA reductase (444 aa).

Residues 49–52, S109, 114–116, and Q120 contribute to the substrate site; these read TCNR and ETQ. The active-site Nucleophile is the C50. 189-194 lines the NADP(+) pocket; it reads GAGKMG.

This sequence belongs to the glutamyl-tRNA reductase family. Homodimer.

It carries out the reaction (S)-4-amino-5-oxopentanoate + tRNA(Glu) + NADP(+) = L-glutamyl-tRNA(Glu) + NADPH + H(+). Its pathway is porphyrin-containing compound metabolism; protoporphyrin-IX biosynthesis; 5-aminolevulinate from L-glutamyl-tRNA(Glu): step 1/2. Functionally, catalyzes the NADPH-dependent reduction of glutamyl-tRNA(Glu) to glutamate 1-semialdehyde (GSA). The sequence is that of Glutamyl-tRNA reductase from Bacillus cereus (strain ZK / E33L).